We begin with the raw amino-acid sequence, 403 residues long: MTKNSTECSPANQTGLERVLRSPAIAGLVLLVSMLVAFFWVNSPFADSYEAIHHAPAAISIGSFELAKPLILWINEGLMIVFFFLIGLEIKREVFEGQLSSPKQIALPAFAALGGMLVPAAIFLAFNNGSEEYVRGWAVPAATDIVLALALLAMLGSRVPIALKVFLTALAIFDDFGTLVIIALAYSEGLSLPSLLMAALGTLALIVLNRLRVASLTAYVLVGVFVWVSVLESGVHSTLAGVIIAWCIPMRVSGREFLHKIEHDLSPWVALLIVPLFAFFNAGIDLGGVDFETFFGPLGLGIILGLFVGKQVGVMLGVGLAVVLRIGARPIEVSWGHLYGAALLSGVGFTMSLFVAGLAFEQPGAVLTVNLAVVVGSVLSATGGLVVLARSYQTSPSLANAPD.

The next 12 helical transmembrane spans lie at 25–45 (IAGL…NSPF), 70–90 (LILW…GLEI), 105–125 (IALP…IFLA), 136–156 (GWAV…AMLG), 165–185 (VFLT…IALA), 188–208 (EGLS…LIVL), 213–233 (VASL…VLES), 234–254 (GVHS…RVSG), 269–289 (VALL…LGGV), 302–322 (IILG…GLAV), 340–360 (GAAL…GLAF), and 369–389 (VNLA…VVLA).

The protein belongs to the NhaA Na(+)/H(+) (TC 2.A.33) antiporter family.

It is found in the cell inner membrane. It carries out the reaction Na(+)(in) + 2 H(+)(out) = Na(+)(out) + 2 H(+)(in). Functionally, na(+)/H(+) antiporter that extrudes sodium in exchange for external protons. This Maricaulis maris (strain MCS10) (Caulobacter maris) protein is Na(+)/H(+) antiporter NhaA.